The chain runs to 232 residues: MLEGIFDINHVFDEEGIKTLKRFGWDGSVAVQNHNEYSEEKINTAVEYGENCEFKVYSGVKISTKNQNEMEKAVKKYRNKVDILLVEGGDVKINRRVLEMNDVDILSTPELNRMDNGLDHILARLGSTNRVAVELNFGNLLKSKNYDRSKILWAFQRNLKLSKKYDTPVVISSGANDIYGIKAPGDLRGFLNTVADPLYSKKIIETTSKIIDYRLYLKNKNVLMPGLEIVEE.

Belongs to the eukaryotic/archaeal RNase P protein component 3 family. Consists of a catalytic RNA component and at least 5 protein subunits.

Its subcellular location is the cytoplasm. It carries out the reaction Endonucleolytic cleavage of RNA, removing 5'-extranucleotides from tRNA precursor.. Part of ribonuclease P, a protein complex that generates mature tRNA molecules by cleaving their 5'-ends. This is Ribonuclease P protein component 3 from Methanococcus maripaludis (strain DSM 14266 / JCM 13030 / NBRC 101832 / S2 / LL).